Consider the following 82-residue polypeptide: ATP synthase subunit 9, mitochondrial (82 aa).

The next 2 membrane-spanning stretches (helical) occupy residues 8 to 28 (IGAG…GNVF) and 45 to 67 (SFGY…PMMA).

Belongs to the ATPase C chain family. As to quaternary structure, F-type ATPases have 2 components, CF(1) - the catalytic core - and CF(0) - the membrane proton channel. CF(1) has five subunits: alpha(3), beta(3), gamma(1), delta(1), epsilon(1). CF(0) has three main subunits: a, b and c.

Its subcellular location is the mitochondrion membrane. Functionally, this protein is one of the chains of the nonenzymatic membrane component (F0) of mitochondrial ATPase. The sequence is that of ATP synthase subunit 9, mitochondrial (ATP9) from Malus domestica (Apple).